A 156-amino-acid chain; its full sequence is RNA polymerase sigma factor SigS (156 aa).

A Polymerase core binding motif is present at residues 29-44; it reads EYYQLLLIKMWQLSQI. The segment at residues 126-145 is a DNA-binding region (H-T-H motif); sequence QFEIAEIMSLSLSTIKLIKM.

It belongs to the sigma-70 factor family.

In terms of biological role, sigma factors are initiation factors that promote the attachment of RNA polymerase to specific initiation sites and are then released. Sigma-S contributes to the protection against external stress, thus playing a role in cellular fitness and survival. This is RNA polymerase sigma factor SigS (sigS) from Staphylococcus aureus (strain NCTC 8325 / PS 47).